Here is a 209-residue protein sequence, read N- to C-terminus: Large ribosomal subunit protein uL3 (209 aa).

Positions 127–164 are disordered; the sequence is NFSGGQRTHGQSDRLRAPGSVGGASDPSRTFKGTKMGG.

It belongs to the universal ribosomal protein uL3 family. As to quaternary structure, part of the 50S ribosomal subunit. Forms a cluster with proteins L14 and L19.

Its function is as follows. One of the primary rRNA binding proteins, it binds directly near the 3'-end of the 23S rRNA, where it nucleates assembly of the 50S subunit. The chain is Large ribosomal subunit protein uL3 from Chlorobium phaeobacteroides (strain BS1).